The sequence spans 285 residues: (3S)-malyl-CoA thioesterase (285 aa).

Arg-70 and Glu-122 together coordinate substrate. Residues Glu-122 and Asp-148 each contribute to the Mg(2+) site.

Belongs to the HpcH/HpaI aldolase family. In terms of assembly, homodimer or homotrimer. It depends on Mg(2+) as a cofactor.

It carries out the reaction (S)-malyl-CoA + H2O = (S)-malate + CoA + H(+). Its function is as follows. Catalyzes the hydrolysis of (3S)-malyl-CoA to (3S)-malate and free CoA. Inactive towards beta-methylmalyl-CoA and other CoA esters. The sequence is that of (3S)-malyl-CoA thioesterase from Cereibacter sphaeroides (strain ATCC 17029 / ATH 2.4.9) (Rhodobacter sphaeroides).